A 273-amino-acid chain; its full sequence is Urease accessory protein UreD (273 aa).

This sequence belongs to the UreD family. In terms of assembly, ureD, UreF and UreG form a complex that acts as a GTP-hydrolysis-dependent molecular chaperone, activating the urease apoprotein by helping to assemble the nickel containing metallocenter of UreC. The UreE protein probably delivers the nickel.

Its subcellular location is the cytoplasm. Required for maturation of urease via the functional incorporation of the urease nickel metallocenter. The protein is Urease accessory protein UreD of Rhizobium rhizogenes (strain K84 / ATCC BAA-868) (Agrobacterium radiobacter).